Reading from the N-terminus, the 306-residue chain is Curved DNA-binding protein (306 aa).

The 65-residue stretch at 5–69 folds into the J domain; it reads DYYAIMGVKP…QRRAEYDQMW (65 aa).

The protein localises to the cytoplasm. It localises to the nucleoid. Its function is as follows. DNA-binding protein that preferentially recognizes a curved DNA sequence. It is probably a functional analog of DnaJ; displays overlapping activities with DnaJ, but functions under different conditions, probably acting as a molecular chaperone in an adaptive response to environmental stresses other than heat shock. Lacks autonomous chaperone activity; binds native substrates and targets them for recognition by DnaK. Its activity is inhibited by the binding of CbpM. This Escherichia coli O7:K1 (strain IAI39 / ExPEC) protein is Curved DNA-binding protein.